The chain runs to 193 residues: Probable gluconokinase (193 aa).

21–28 contacts ATP; sequence GPAGSGKT.

The protein belongs to the gluconokinase GntK/GntV family.

It catalyses the reaction D-gluconate + ATP = 6-phospho-D-gluconate + ADP + H(+). It functions in the pathway carbohydrate acid metabolism; D-gluconate degradation. The chain is Probable gluconokinase from Schizosaccharomyces pombe (strain 972 / ATCC 24843) (Fission yeast).